The chain runs to 357 residues: MKLLGFLIVGLSAISALKTKALHLTCEQELRPYSAVVDANCMAFALNGSNIHEAIKYLQAMNIKKAYVLYWNDHDLRGTPMVLYDNGALAPFDPYTNTAKYVLCVEACPCPGSKAASVGGFQAATSSEKIYVEGSARPAQCSEVCIEPVERRPHYKKIVVNPSPSNCIPCEPECYDSSSSSECNKKRCKTFPRICKEKCGSRRRGCPRKVEVLKSQKTYTFDIEKYRRRGEVVVRVCSKDSKEKFERFILSRNGEIRGNNNKNCILEPLPKCLRCPGQLHKLKKHIERKVCQEVCMYINAKCDIFVLVGDCDFYRVVVNDRRRYRNLHLKKVRGHKLRELIKHGLFGVEFGPLDLDR.

The signal sequence occupies residues 1–16; the sequence is MKLLGFLIVGLSAISA. N-linked (GlcNAc...) asparagine glycosylation is present at Asn47. Positions 150–158 match the HBM1 motif; that stretch reads ERRPHYKKI. The HBM2 motif lies at 329–334; that stretch reads LKKVRG.

The protein localises to the spore wall. Its subcellular location is the spore. It is found in the perispore. Its function is as follows. Spore wall protein involved in the adhesion to host cells surface glycoaminoglycans (GAGs). Microsporidian spore adherence is an integral part of activation and host cell invasion which requires the extrusion at the spore apex of a very long and coiled structure, the polar tube, through which the sporoplasm is pushed to enter into the potential host cell. This chain is Spore wall and anchoring disk complex protein EnP1 (EnP1), found in Encephalitozoon cuniculi (strain GB-M1) (Microsporidian parasite).